Consider the following 106-residue polypeptide: Putative double-stranded DNA mimic protein VCM66_1163 (106 aa).

This sequence belongs to the putative dsDNA mimic protein family.

Functionally, may act as a double-stranded DNA (dsDNA) mimic. Probably regulates the activity of a dsDNA-binding protein. This chain is Putative double-stranded DNA mimic protein VCM66_1163, found in Vibrio cholerae serotype O1 (strain M66-2).